The sequence spans 259 residues: MDRSAEFRKWKAQCLSKADLSRKGSVDEDVVELVQFLNMRDQFFTTSSCAGRILLLDRGINGFEVQKQNCCWLLVTHKLCVKDDVIVALKKANGDATLKFEPFVLHVQCRQLQDAQILHSMAIDSGFRNSGITVGKRGKTMLAVRSTHGLEVPLSHKGKLMVTEEYIDFLLNVANQKMEENKKRIERFYNCLQHALERETMTNLHPKIKEKNNSSYIHKKKRNPEKTRAQCITKESDEELENDDDDDLGINVTIFPEDY.

Serine 25 is subject to Phosphoserine.

It belongs to the TYW3 family.

The catalysed reaction is 4-demethyl-7-[(3S)-3-amino-3-carboxypropyl]wyosine(37) in tRNA(Phe) + S-adenosyl-L-methionine = 7-[(3S)-3-amino-3-carboxypropyl]wyosine(37) in tRNA(Phe) + S-adenosyl-L-homocysteine + H(+). Its pathway is tRNA modification; wybutosine-tRNA(Phe) biosynthesis. Functionally, probable S-adenosyl-L-methionine-dependent methyltransferase that acts as a component of the wybutosine biosynthesis pathway. Wybutosine is a hyper modified guanosine with a tricyclic base found at the 3'-position adjacent to the anticodon of eukaryotic phenylalanine tRNA. The polypeptide is tRNA wybutosine-synthesizing protein 3 homolog (TYW3) (Homo sapiens (Human)).